We begin with the raw amino-acid sequence, 1013 residues long: 2-oxoglutarate dehydrogenase, mitochondrial (1013 aa).

Residues 1–39 (MFTLKQVINKSIQTSMKNGVMSSAVKRSFSTVGGINQPK) constitute a mitochondrion transit peptide. Thiamine diphosphate-binding residues include arginine 302, aspartate 403, asparagine 436, isoleucine 438, and glutamine 664. Residues aspartate 403, asparagine 436, and isoleucine 438 each coordinate Mg(2+).

Belongs to the alpha-ketoglutarate dehydrogenase family. In terms of assembly, homodimer. Component of the 2-oxoglutarate dehydrogenase complex. It depends on thiamine diphosphate as a cofactor. The cofactor is Mg(2+).

It localises to the mitochondrion matrix. It carries out the reaction N(6)-[(R)-lipoyl]-L-lysyl-[protein] + 2-oxoglutarate + H(+) = N(6)-[(R)-S(8)-succinyldihydrolipoyl]-L-lysyl-[protein] + CO2. Its function is as follows. The 2-oxoglutarate dehydrogenase complex catalyzes the overall conversion of 2-oxoglutarate to succinyl-CoA and CO(2). It contains multiple copies of three enzymatic components: 2-oxoglutarate dehydrogenase (E1), dihydrolipoamide succinyltransferase (E2) and lipoamide dehydrogenase (E3). This chain is 2-oxoglutarate dehydrogenase, mitochondrial (ogdh), found in Dictyostelium discoideum (Social amoeba).